A 429-amino-acid chain; its full sequence is Glutamate-1-semialdehyde 2,1-aminomutase (429 aa).

N6-(pyridoxal phosphate)lysine is present on lysine 267.

This sequence belongs to the class-III pyridoxal-phosphate-dependent aminotransferase family. HemL subfamily. Homodimer. Requires pyridoxal 5'-phosphate as cofactor.

The protein localises to the cytoplasm. The catalysed reaction is (S)-4-amino-5-oxopentanoate = 5-aminolevulinate. Its pathway is porphyrin-containing compound metabolism; protoporphyrin-IX biosynthesis; 5-aminolevulinate from L-glutamyl-tRNA(Glu): step 2/2. The polypeptide is Glutamate-1-semialdehyde 2,1-aminomutase (Xanthomonas campestris pv. campestris (strain 8004)).